The chain runs to 121 residues: Large ribosomal subunit protein bL12 (121 aa).

This sequence belongs to the bacterial ribosomal protein bL12 family. In terms of assembly, homodimer. Part of the ribosomal stalk of the 50S ribosomal subunit. Forms a multimeric L10(L12)X complex, where L10 forms an elongated spine to which 2 to 4 L12 dimers bind in a sequential fashion. Binds GTP-bound translation factors.

In terms of biological role, forms part of the ribosomal stalk which helps the ribosome interact with GTP-bound translation factors. Is thus essential for accurate translation. The sequence is that of Large ribosomal subunit protein bL12 from Pseudomonas putida (strain GB-1).